A 430-amino-acid chain; its full sequence is F-box/kelch-repeat protein At4g33290 (430 aa).

The F-box domain maps to 1–44 (MITDLPKDLIEEILSRVSMTSMRVVRLTCKSWNTLSNSESFKKM). Kelch repeat units lie at residues 161-207 (LLRF…CVQG), 312-363 (VPFI…IIEE), and 383-430 (LVRI…RPTR).

This is F-box/kelch-repeat protein At4g33290 from Arabidopsis thaliana (Mouse-ear cress).